A 226-amino-acid polypeptide reads, in one-letter code: uncharacterized protein (226 aa).

The next 4 membrane-spanning stretches (helical) occupy residues 25 to 45 (ALAW…IFLI), 54 to 74 (FLLF…YFIF), 107 to 127 (ELFL…YFFI), and 153 to 173 (TITI…CFSS).

Its subcellular location is the cell membrane. This is an uncharacterized protein from Mycoplasma genitalium (strain ATCC 33530 / DSM 19775 / NCTC 10195 / G37) (Mycoplasmoides genitalium).